The following is a 138-amino-acid chain: Acidic phospholipase A2 1 (138 aa).

A signal peptide spans 1-16; sequence MRTLWIVAVWLMGVEG. Intrachain disulfides connect Cys42–Cys131, Cys44–Cys60, Cys59–Cys111, Cys65–Cys138, Cys66–Cys104, Cys73–Cys97, and Cys91–Cys102. Positions 43, 45, and 47 each coordinate Ca(2+). The active site involves His63. A Ca(2+)-binding site is contributed by Asp64. Asp105 is a catalytic residue.

In terms of assembly, monomer. Requires Ca(2+) as cofactor. As to expression, expressed by the venom gland.

It is found in the secreted. It catalyses the reaction a 1,2-diacyl-sn-glycero-3-phosphocholine + H2O = a 1-acyl-sn-glycero-3-phosphocholine + a fatty acid + H(+). Its function is as follows. Snake venom phospholipase that inhibits ADP- and collagen-induced human platelet aggregation. This inhibition is completely inhibited by abolition of catalytic activity in case of collagen as inducer and partially inhibited in case of ADP as inducer. PLA2 catalyzes the calcium-dependent hydrolysis of the 2-acyl groups in 3-sn-phosphoglycerides. In Macrovipera lebetinus (Levantine viper), this protein is Acidic phospholipase A2 1.